Reading from the N-terminus, the 245-residue chain is tRNA pseudouridine synthase A 2 (245 aa).

Asp53 acts as the Nucleophile in catalysis. Substrate is bound at residue Tyr111.

It belongs to the tRNA pseudouridine synthase TruA family. As to quaternary structure, homodimer.

The enzyme catalyses uridine(38/39/40) in tRNA = pseudouridine(38/39/40) in tRNA. Its function is as follows. Formation of pseudouridine at positions 38, 39 and 40 in the anticodon stem and loop of transfer RNAs. The polypeptide is tRNA pseudouridine synthase A 2 (Bacillus cereus (strain ATCC 10987 / NRS 248)).